The sequence spans 155 residues: UPF0178 protein RPC_3085 (155 aa).

The protein belongs to the UPF0178 family.

The chain is UPF0178 protein RPC_3085 from Rhodopseudomonas palustris (strain BisB18).